The chain runs to 137 residues: Acidic phospholipase A2 beta-bungarotoxin A chain (137 aa).

The N-terminal stretch at 1 to 9 (AVCVSLLGA) is a signal peptide. A propeptide spanning residues 10 to 17 (ANIPPHPL) is cleaved from the precursor. 6 disulfides stabilise this stretch: C44–C136, C46–C62, C61–C117, C68–C110, C78–C103, and C96–C108. Y45, G47, and G49 together coordinate Ca(2+). The active site involves H65. D66 serves as a coordination point for Ca(2+). The active site involves D111.

It belongs to the phospholipase A2 family. Group I subfamily. D49 sub-subfamily. As to quaternary structure, heterodimer; disulfide-linked. The A chain has phospholipase A2 activity and the B chain shows homology with the basic protease inhibitors. Ca(2+) is required as a cofactor. Expressed by the venom gland.

The protein localises to the secreted. It catalyses the reaction a 1,2-diacyl-sn-glycero-3-phosphocholine + H2O = a 1-acyl-sn-glycero-3-phosphocholine + a fatty acid + H(+). Its function is as follows. Beta bungarotoxin is a presynaptic neurotoxin. The A chain has phospholipase activity. PLA2 catalyzes the calcium-dependent hydrolysis of the 2-acyl groups in 3-sn-phosphoglycerides. The protein is Acidic phospholipase A2 beta-bungarotoxin A chain of Bungarus candidus (Malayan krait).